We begin with the raw amino-acid sequence, 355 residues long: Carbohydrate sulfotransferase 10 (355 aa).

The Cytoplasmic portion of the chain corresponds to 1 to 6 (MHHRWL). Residues 7-27 (LLVACFWVLFMLMVASKLITL) traverse the membrane as a helical; Signal-anchor for type II membrane protein segment. Over 28–355 (TMKDPEGYGN…FGYKEPTFLF (328 aa)) the chain is Lumenal. N93 and N98 each carry an N-linked (GlcNAc...) asparagine glycan. Residues 126-132 (PKVGNTQ) and 188-196 (RDPFERLIS) each bind 3'-phosphoadenylyl sulfate. The N-linked (GlcNAc...) asparagine glycan is linked to N316.

It belongs to the sulfotransferase 2 family.

It localises to the golgi apparatus membrane. Catalyzes the transfer of sulfate to position 3 of terminal glucuronic acid of both protein- and lipid-linked oligosaccharides. Participates in biosynthesis of HNK-1 carbohydrate structure, a sulfated glucuronyl-lactosaminyl residue carried by many neural recognition molecules. The polypeptide is Carbohydrate sulfotransferase 10 (chst10) (Xenopus laevis (African clawed frog)).